Here is a 189-residue protein sequence, read N- to C-terminus: MSVTSLSFPYGESIQWFCADNAKNLPSSPLKEWLLAPGSLTQKLKGCCDKFEVKILGEGQCVPLEGEYPKQNAVWVREVLLCLDSVPWVFARTLIPQSLLSTRQADFLGLGTRPLGELLFSQDSFVPGRIEIARFTTDSRLAQLAQSLAQNVEHELWGRRRYFHHDEEEMFVSEMFLPAAVQAMARLQP.

Arginine 77, leucine 115, and glutamate 174 together coordinate substrate.

It belongs to the UbiC family.

The protein resides in the cytoplasm. It carries out the reaction chorismate = 4-hydroxybenzoate + pyruvate. Its pathway is cofactor biosynthesis; ubiquinone biosynthesis. In terms of biological role, removes the pyruvyl group from chorismate, with concomitant aromatization of the ring, to provide 4-hydroxybenzoate (4HB) for the ubiquinone pathway. The polypeptide is Probable chorismate pyruvate-lyase (Shewanella sp. (strain MR-7)).